The following is a 110-amino-acid chain: Ubiquitin-related modifier 1 (110 aa).

G110 bears the 1-thioglycine mark. A Glycyl lysine isopeptide (Gly-Lys) (interchain with K-? in acceptor proteins) cross-link involves residue G110.

Belongs to the URM1 family. Homodimer; homodimerization may provide an autoprotection to the highly active C-terminal residue before attacking its substrates. Forms a conjugate with the target protein AHP1. Post-translationally, C-terminal thiocarboxylation occurs in 2 steps, it is first acyl-adenylated (-COAMP) via the hesA/moeB/thiF part of UBA4, then thiocarboxylated (-COSH) via the rhodanese domain of UBA4.

The protein localises to the cytoplasm. It functions in the pathway tRNA modification; 5-methoxycarbonylmethyl-2-thiouridine-tRNA biosynthesis. In terms of biological role, acts as a sulfur carrier required for 2-thiolation of mcm(5)S(2)U at tRNA wobble positions of cytosolic tRNA(Lys), tRNA(Glu) and tRNA(Gln). Serves as sulfur donor in tRNA 2-thiolation reaction by being thiocarboxylated (-COSH) at its C-terminus by the MOCS3 homolog UBA4. The sulfur is then transferred to tRNA to form 2-thiolation of mcm(5)S(2)U. Prior mcm(5) tRNA modification by the elongator complex is required for 2-thiolation. Also acts as a ubiquitin-like protein (UBL) that is covalently conjugated via an isopeptide bond to lysine residues of target proteins such as AHP1. Conjugation does not depend on the canonical cascade of E2 ubiquitin-conjugating enzymes and/or E3 ligases. The conjugation reaction requires a thiocarboxylated C-terminus of URM1 and a peroxidatic cysteine in the target protein, as the sulfur atom of the URM1 thiocarboxyl group is transferred to redox-active cysteine residues in the target protein. Oxidative stress specifically induces the formation of UBL-protein conjugates. Covalent modification with URM1 promotes the phase separation of a wide range of proteins into condensates like stress granules. In Chaetomium thermophilum (strain DSM 1495 / CBS 144.50 / IMI 039719) (Thermochaetoides thermophila), this protein is Ubiquitin-related modifier 1.